Reading from the N-terminus, the 263-residue chain is Type III pantothenate kinase (263 aa).

Residue 6–13 (DVGNTRIK) coordinates ATP. Residues Tyr-92 and 99–102 (GTDR) contribute to the substrate site. Asp-101 acts as the Proton acceptor in catalysis. ATP is bound at residue Thr-124. Thr-174 serves as a coordination point for substrate.

Belongs to the type III pantothenate kinase family. In terms of assembly, homodimer. Requires NH4(+) as cofactor. K(+) serves as cofactor.

It is found in the cytoplasm. The catalysed reaction is (R)-pantothenate + ATP = (R)-4'-phosphopantothenate + ADP + H(+). It functions in the pathway cofactor biosynthesis; coenzyme A biosynthesis; CoA from (R)-pantothenate: step 1/5. Functionally, catalyzes the phosphorylation of pantothenate (Pan), the first step in CoA biosynthesis. The polypeptide is Type III pantothenate kinase (Azoarcus sp. (strain BH72)).